A 152-amino-acid polypeptide reads, in one-letter code: Probable histone H2A.3 (152 aa).

2 disordered regions span residues 1–25 (MDAS…KKSV) and 129–152 (KTER…PKKA). A compositionally biased stretch (basic residues) spans 7–25 (TTKKGAGGRKGGGPRKKSV). Residues 129–142 (KTERANTGGKEPKT) are compositionally biased toward basic and acidic residues. The SPKK motif signature appears at 148–151 (SPKK).

Belongs to the histone H2A family. The nucleosome is a histone octamer containing two molecules each of H2A, H2B, H3 and H4 assembled in one H3-H4 heterotetramer and two H2A-H2B heterodimers. The octamer wraps approximately 147 bp of DNA.

The protein resides in the nucleus. It is found in the chromosome. Its function is as follows. Core component of nucleosome. Nucleosomes wrap and compact DNA into chromatin, limiting DNA accessibility to the cellular machineries which require DNA as a template. Histones thereby play a central role in transcription regulation, DNA repair, DNA replication and chromosomal stability. DNA accessibility is regulated via a complex set of post-translational modifications of histones, also called histone code, and nucleosome remodeling. The polypeptide is Probable histone H2A.3 (Medicago truncatula (Barrel medic)).